The following is a 1332-amino-acid chain: Elongator complex protein 1 (1332 aa).

Residues serine 471, serine 804, serine 867, serine 1171, and serine 1174 each carry the phosphoserine modification. Positions 885–1332 are mediates dimerization; that stretch reads VDVNELYDHS…RTQWKLSLLD (448 aa). Positions 1150–1208 are disordered; that stretch reads QAGLDDEVPHGQESDLFSETSSVVSGSEMSGKYSHSNSRISARSSKNRRKAERKKHSLK. The span at 1164 to 1177 shows a compositional bias: polar residues; that stretch reads DLFSETSSVVSGSE. Residues 1191-1209 form a required for binding to tRNA region; sequence ARSSKNRRKAERKKHSLKE. A compositionally biased stretch (basic residues) spans 1194-1206; sequence SKNRRKAERKKHS.

This sequence belongs to the ELP1/IKA1 family. In terms of assembly, homodimer; dimerization promotes ELP1 stability and elongator complex formation. Component of the elongator complex which consists of ELP1, ELP2, ELP3, ELP4, ELP5 and ELP6. Interacts preferentially with MAP3K14/NIK followed by IKK-alpha and IKK-beta.

It is found in the cytoplasm. Its subcellular location is the nucleus. It functions in the pathway tRNA modification; 5-methoxycarbonylmethyl-2-thiouridine-tRNA biosynthesis. Its function is as follows. Component of the elongator complex which is required for multiple tRNA modifications, including mcm5U (5-methoxycarbonylmethyl uridine), mcm5s2U (5-methoxycarbonylmethyl-2-thiouridine), and ncm5U (5-carbamoylmethyl uridine). The elongator complex catalyzes the formation of carboxymethyluridine in the wobble base at position 34 in tRNAs. Regulates the migration and branching of projection neurons in the developing cerebral cortex, through a process depending on alpha-tubulin acetylation. ELP1 binds to tRNA, mediating interaction of the elongator complex with tRNA. May act as a scaffold protein that assembles active IKK-MAP3K14 complexes (IKKA, IKKB and MAP3K14/NIK). This Homo sapiens (Human) protein is Elongator complex protein 1.